We begin with the raw amino-acid sequence, 242 residues long: Probable transcriptional regulatory protein Bphy_2064 (242 aa).

This sequence belongs to the TACO1 family.

Its subcellular location is the cytoplasm. The polypeptide is Probable transcriptional regulatory protein Bphy_2064 (Paraburkholderia phymatum (strain DSM 17167 / CIP 108236 / LMG 21445 / STM815) (Burkholderia phymatum)).